Reading from the N-terminus, the 184-residue chain is Photosystem I assembly protein Ycf4 (184 aa).

The next 2 membrane-spanning stretches (helical) occupy residues 19–39 and 57–77; these read ISNL…VLVG and IIFF…LFIS.

The protein belongs to the Ycf4 family.

The protein localises to the plastid thylakoid membrane. Its function is as follows. Seems to be required for the assembly of the photosystem I complex. In Cuscuta reflexa (Southern Asian dodder), this protein is Photosystem I assembly protein Ycf4.